Consider the following 1379-residue polypeptide: MAERANLVFHNKVIDGTAIKRLISRLIDHFGMAYTSHILDQVKTLGFQQATATSISLGIDDLLTIPSKGWLVQDAEQQSWILEKHHHYGNVHAVEKLRQSIEIWYATSEYLRQEMNPNFRMTDPFNPVHMMSFSGARGNASQVHQLVGMRGLMSDPQGQMIDLPIQSNLREGLSLTEYIISCYGARKGVVDTAVRTSDAGYLTRRLVEVVQHIVVRRTDCGTIRGISVSPRNKNRMMSERIFIQTLIGRVLADDIYIGSRCVAFRNQDLGIGLVNGLITSGTQSISIRTPFTCRSTSWICRLCYGRSPTHGDLVELGEAVGIIAGQSIGEPGTQLTLRTFHTGGVFTGGTAEHVRAPYNGKIKFNEDLVHPTRTRHGHPAFLCYIDLSVIIESEDIIHSVTIPPKSFILVQNDQYVESEQVIAEIREGTYTFHFKERVRKYIYSDSEGEMHWSTDVSHAPEFTYSNVHLLPKTSHLWILSGSSCGSSLILFSIHKDQDQMNIPFLSVERKSISSLSVNNDQVSQKFLSSDFADQKKSGIPDYSELNGNLGTSHYNFIYSAIFHKNSDLLAKRRRNRFLIPFQSIQEQEKEFIPHSGISIEIPINGIFRRNSIFAFFDDPRYRRKSSGILKYGTLKADSIIQKEDMIEYRGVQKFKTKYEMKVDRFFFIPEEVHILPESSDIMVQNYSIIGVNTRLTLNIRSQVGGLIRVERKKKRIELKIFSGDIHFPDKTDKISRHSGILLPPGKGKTNSKESKKFKNWIYVQRITPTKKKFFVLVRPVATYEIADSINLATLFPQDLFREKDNIQLRVFNYILYGNGKPTRGISHTSIQLVRTCLVLNWDQDNKNSSLEEVRAFFVEVSTKGLIRDFIRIGLVKSHISYIRKRNNSPDSGLISADHMNPFYSISPKAGILQQSLRQNHGTIRMFLNRNKESQSLLILSSSNCFRMGPFNHVKYHNVINESIKKNPLITIKNSSGPLGTAAQISNFYSFLPLLTYNKISVIKYLQLDNLKDIFQVINSYLIDENGRIFNLDPYSNVVLNPFKLNWYFLHKNYHHNYCEETSTIISLGQFFCENLCIAKKEPQLKSGQVLIVQRDSVVIRAAKPYLATPGAKVHGHYREILYEGDTLVTFIYEKSRSGDITQGLPKVEQVLEVRSIDSISLNLEKRIKGWNKCITRILGIPWGFLIGAELTIVQSRISLVNKIQKVYRSQGVQIHNRHIEIIVRQITSKVLVSEEGMSNVFLPGELIGLLRAERTGRALEEAICYRAVLLGITRASLNTQSFISEASFQETARVLAKAALRGRIDWLKGLKENVVLGGVIPAGTGFNKGLVHCSRQHTNILLEKKTKNFSLFEGDMRDILFYHREFCDSSISKSDFSRI.

Residues Cys-220, Cys-293, Cys-300, and Cys-303 each contribute to the Zn(2+) site.

This sequence belongs to the RNA polymerase beta' chain family. RpoC2 subfamily. In plastids the minimal PEP RNA polymerase catalytic core is composed of four subunits: alpha, beta, beta', and beta''. When a (nuclear-encoded) sigma factor is associated with the core the holoenzyme is formed, which can initiate transcription. It depends on Zn(2+) as a cofactor.

It is found in the plastid. It localises to the chloroplast. It carries out the reaction RNA(n) + a ribonucleoside 5'-triphosphate = RNA(n+1) + diphosphate. DNA-dependent RNA polymerase catalyzes the transcription of DNA into RNA using the four ribonucleoside triphosphates as substrates. The protein is DNA-directed RNA polymerase subunit beta'' of Crucihimalaya wallichii (Rock-cress).